The sequence spans 397 residues: Tryptophan synthase beta chain 1 (397 aa).

Lysine 94 is modified (N6-(pyridoxal phosphate)lysine).

The protein belongs to the TrpB family. As to quaternary structure, tetramer of two alpha and two beta chains. Pyridoxal 5'-phosphate is required as a cofactor.

It carries out the reaction (1S,2R)-1-C-(indol-3-yl)glycerol 3-phosphate + L-serine = D-glyceraldehyde 3-phosphate + L-tryptophan + H2O. It functions in the pathway amino-acid biosynthesis; L-tryptophan biosynthesis; L-tryptophan from chorismate: step 5/5. Functionally, the beta subunit is responsible for the synthesis of L-tryptophan from indole and L-serine. The protein is Tryptophan synthase beta chain 1 (trpB1) of Archaeoglobus fulgidus (strain ATCC 49558 / DSM 4304 / JCM 9628 / NBRC 100126 / VC-16).